Consider the following 546-residue polypeptide: Chaperonin GroEL (546 aa).

ATP is bound by residues 30–33 (TLGP), Lys-51, 87–91 (DGTTT), Gly-415, 479–481 (NAA), and Asp-495. Positions 527 to 546 (DESAAPAMPGGMGGMGDMGM) are disordered. Over residues 536–546 (GGMGGMGDMGM) the composition is skewed to gly residues.

The protein belongs to the chaperonin (HSP60) family. As to quaternary structure, forms a cylinder of 14 subunits composed of two heptameric rings stacked back-to-back. Interacts with the co-chaperonin GroES.

It is found in the cytoplasm. It catalyses the reaction ATP + H2O + a folded polypeptide = ADP + phosphate + an unfolded polypeptide.. Functionally, together with its co-chaperonin GroES, plays an essential role in assisting protein folding. The GroEL-GroES system forms a nano-cage that allows encapsulation of the non-native substrate proteins and provides a physical environment optimized to promote and accelerate protein folding. The protein is Chaperonin GroEL of Acidovorax sp. (strain JS42).